The chain runs to 568 residues: Potassium-transporting ATPase potassium-binding subunit (568 aa).

A run of 12 helical transmembrane segments spans residues 7–27 (ITIG…GGFL), 65–85 (HYAL…YAIL), 136–156 (GLTV…AAII), 179–199 (LYVL…EGIP), 254–274 (LTNF…TNVF), 285–305 (WAVF…VYWA), 332–352 (FGVA…CGAV), 354–374 (AMHE…MMLG), 377–397 (IIGG…IAVF), 423–443 (MLAV…AVVV), 487–507 (ITLG…ALAI), and 530–550 (LFIG…FLPA).

This sequence belongs to the KdpA family. In terms of assembly, the system is composed of three essential subunits: KdpA, KdpB and KdpC.

It localises to the cell inner membrane. Functionally, part of the high-affinity ATP-driven potassium transport (or Kdp) system, which catalyzes the hydrolysis of ATP coupled with the electrogenic transport of potassium into the cytoplasm. This subunit binds the periplasmic potassium ions and delivers the ions to the membrane domain of KdpB through an intramembrane tunnel. This is Potassium-transporting ATPase potassium-binding subunit from Granulibacter bethesdensis (strain ATCC BAA-1260 / CGDNIH1).